The chain runs to 521 residues: MTIEAAMGEEAIKENLEQFLIVLSVSLGVATLSQISSFFRQIPYTLLLVIVGLGLAFVDIRLVNLSPELILEIFLPPLLFEAAWNIRWRNLKKNLFPVVLLAIIGVVISVVGIGFSLNYFSGLSLPIALLVGAILAATDPVSVIALFRELGVGERLTVLMEGESLFNDGVAVVAFSLLVGIPLGTQEFSVTNTLIQFVTLQGIGIGCGGVIGFGISYLTQRFDLPLVEQSLTLVSAYGTYLITEELGGSGVIGVVTVGLILGNFGSRIGMNPRTRLLVSEFWEFIAFFVNSIVFLLIGDQINIRGLADNGQLILITIIALVIIRAISIYGLGTISNLITKQDISWQEETVLWWGGLRGSVSIALALSVPVMLDGRQDIIEAVFGVVLFTLLVQGLTMQTVIEKLGLIGDRAQRRTYSELIARRSALERVLAHLNAVPPSPSIRMKSLKTTKEASKGQLESRQTKKLRSYNNSYPQLRSLEQEQLRELTFKVEADTYAELIRAGKLNNNLSPLLQEVLAKPE.

Topologically, residues Met1–Gln18 are periplasmic. A helical membrane pass occupies residues Phe19–Phe39. The Cytoplasmic portion of the chain corresponds to Arg40–Gln41. A helical transmembrane segment spans residues Ile42–Leu62. Residues Val63 to Asn94 lie on the Periplasmic side of the membrane. The helical transmembrane segment at Leu95–Phe115 threads the bilayer. Residues Ser116–Pro126 are Cytoplasmic-facing. A helical membrane pass occupies residues Ile127 to Phe147. Residues Arg148–Ser164 are Periplasmic-facing. The helical transmembrane segment at Leu165–Thr185 threads the bilayer. Topologically, residues Gln186–Leu194 are cytoplasmic. The helical transmembrane segment at Ile195–Ile215 threads the bilayer. Residues Ser216 to Glu245 are Periplasmic-facing. A helical transmembrane segment spans residues Leu246–Ser266. Topologically, residues Arg267–Leu276 are cytoplasmic. The chain crosses the membrane as a helical span at residues Leu277–Ile297. The Periplasmic segment spans residues Gly298 to Gln311. The helical transmembrane segment at Leu312–Gly332 threads the bilayer. At Thr333 to Thr349 the chain is on the cytoplasmic side. A helical membrane pass occupies residues Val350 to Val370. Over Met371–Glu380 the chain is Periplasmic. A helical membrane pass occupies residues Ala381–Ile401. Topologically, residues Glu402 to Glu521 are cytoplasmic.

This sequence belongs to the monovalent cation:proton antiporter 1 (CPA1) transporter (TC 2.A.36) family.

Its subcellular location is the cell inner membrane. Functionally, na(+)/H(+) antiporter that extrudes sodium in exchange for external protons. Also shows high Ca(2+)/H(+) antiporter activity at alkaline pH. Does not catalyze exchange between Li(+) and H(+). The polypeptide is Na(+)/H(+) antiporter ApNhaP (apnhaP) (Aphanothece halophytica).